The chain runs to 1415 residues: DNA-directed RNA polymerase subunit beta' (1415 aa).

Zn(2+)-binding residues include Cys-71, Cys-73, Cys-86, and Cys-89. Asp-461, Asp-463, and Asp-465 together coordinate Mg(2+). Zn(2+) contacts are provided by Cys-815, Cys-889, Cys-896, and Cys-899.

This sequence belongs to the RNA polymerase beta' chain family. As to quaternary structure, the RNAP catalytic core consists of 2 alpha, 1 beta, 1 beta' and 1 omega subunit. When a sigma factor is associated with the core the holoenzyme is formed, which can initiate transcription. It depends on Mg(2+) as a cofactor. Zn(2+) serves as cofactor.

The enzyme catalyses RNA(n) + a ribonucleoside 5'-triphosphate = RNA(n+1) + diphosphate. Its function is as follows. DNA-dependent RNA polymerase catalyzes the transcription of DNA into RNA using the four ribonucleoside triphosphates as substrates. The sequence is that of DNA-directed RNA polymerase subunit beta' from Haemophilus influenzae (strain ATCC 51907 / DSM 11121 / KW20 / Rd).